The chain runs to 339 residues: MRKLKDIKPLELKDDVLYVINQLKLPHELVWEKLETLADYEKAIKDMIVRGAPLIGIVGAYGFYTGIKEGIDYIQVYERLKQTRPTAVNLFWALDRMKSIYEKYGNDLNLLLKEAKRIEVEDYHANRSIGGYGEVLIPKKANILTHCNTGALATAGWGTALGIIRSAFENDKDITVYVDETRPYLQGSRLTAWELLREGIPHYIITDSSAGFLMKKGMIDVIVVGADRITLNGDVANKIGTYSLSILAKHHNIPFYVAAPSSSLDFNLESGDEIPIEERNEDEVKNCHCCKVAPQQSHALNYSFDITPADNITAIITEKGIIEKPNKEKILKFFGRKLS.

Residues 50–52, Arg84, and Gln186 contribute to the substrate site; that span reads RGA. Asp227 acts as the Proton donor in catalysis. Position 237-238 (237-238) interacts with substrate; the sequence is NK.

It belongs to the eIF-2B alpha/beta/delta subunits family. MtnA subfamily.

It carries out the reaction 5-(methylsulfanyl)-alpha-D-ribose 1-phosphate = 5-(methylsulfanyl)-D-ribulose 1-phosphate. It functions in the pathway amino-acid biosynthesis; L-methionine biosynthesis via salvage pathway; L-methionine from S-methyl-5-thio-alpha-D-ribose 1-phosphate: step 1/6. In terms of biological role, catalyzes the interconversion of methylthioribose-1-phosphate (MTR-1-P) into methylthioribulose-1-phosphate (MTRu-1-P). This chain is Methylthioribose-1-phosphate isomerase, found in Sulfurihydrogenibium sp. (strain YO3AOP1).